Reading from the N-terminus, the 173-residue chain is Lens fiber membrane intrinsic protein (173 aa).

Residues 1–3 (MYS) lie on the Cytoplasmic side of the membrane. The chain crosses the membrane as a helical span at residues 4 to 24 (FMGGGLFCAWVGTILLVVATA). At 25–66 (TDHWMQYRLSGSFAHQGLWRYCLGNKCFLQTESIAYWNATRA) the chain is on the extracellular side. Trp-43 and Trp-61 each carry a C-linked (Man) tryptophan glycan. N-linked (GlcNAc...) asparagine glycosylation is present at Asn-62. The helical transmembrane segment at 67–87 (FMILSALCATSGIIMGVLAFA) threads the bilayer. The Cytoplasmic portion of the chain corresponds to 88–98 (QQSTFTRLSRP). A helical transmembrane segment spans residues 99 to 119 (FSAGIMFFASTLFVLLALAIY). The Extracellular portion of the chain corresponds to 120–140 (TGVTVSFLGRRFGDWRFSWSY). Residues 141 to 161 (ILGWVALLMTFFAGIFYMCAY) form a helical membrane-spanning segment. At 162–173 (RMHECRRLATPR) the chain is on the cytoplasmic side. Thr-171 is subject to Phosphothreonine.

It belongs to the PMP-22/EMP/MP20 family. Seems to be associated with itself or another lens membrane component via disulfide bonds.

Its subcellular location is the membrane. In terms of biological role, present in the thicker 16-17 nm junctions of mammalian lens fiber cells, where it may contribute to cell junctional organization. Acts as a receptor for calmodulin. May play an important role in both lens development and cataractogenesis. In Mus musculus (Mouse), this protein is Lens fiber membrane intrinsic protein (Lim2).